The sequence spans 655 residues: Kelch-like protein 13 (655 aa).

The BTB domain maps to 92-161; that stretch reads CDVTLMPGDT…IYTAKLSLNM (70 aa). Residues 196–297 enclose the BACK domain; that stretch reads CVEVGRIANT…TPQELINYVQ (102 aa). 6 Kelch repeats span residues 341-389, 390-441, 442-488, 490-535, 537-587, and 588-636; these read HLVT…VIGN, FLYV…ALKG, YLYA…VYGG, MYIS…TVGE, LYVI…VFEN, and KIYV…TLTV.

Component of the BCR(KLHL9-KLHL13) E3 ubiquitin ligase complex, at least composed of CUL3, KLHL9, KLHL13 and RBX1. Interacts with AURKB.

It participates in protein modification; protein ubiquitination. Its function is as follows. Substrate-specific adapter of a BCR (BTB-CUL3-RBX1) E3 ubiquitin-protein ligase complex required for mitotic progression and cytokinesis. The BCR(KLHL9-KLHL13) E3 ubiquitin ligase complex mediates the ubiquitination of AURKB and controls the dynamic behavior of AURKB on mitotic chromosomes and thereby coordinates faithful mitotic progression and completion of cytokinesis. This Bos taurus (Bovine) protein is Kelch-like protein 13 (KLHL13).